A 110-amino-acid chain; its full sequence is Large ribosomal subunit protein uL22 (110 aa).

Belongs to the universal ribosomal protein uL22 family. As to quaternary structure, part of the 50S ribosomal subunit.

Its function is as follows. This protein binds specifically to 23S rRNA; its binding is stimulated by other ribosomal proteins, e.g. L4, L17, and L20. It is important during the early stages of 50S assembly. It makes multiple contacts with different domains of the 23S rRNA in the assembled 50S subunit and ribosome. Functionally, the globular domain of the protein is located near the polypeptide exit tunnel on the outside of the subunit, while an extended beta-hairpin is found that lines the wall of the exit tunnel in the center of the 70S ribosome. In Alkaliphilus oremlandii (strain OhILAs) (Clostridium oremlandii (strain OhILAs)), this protein is Large ribosomal subunit protein uL22.